A 127-amino-acid polypeptide reads, in one-letter code: Two-component response regulator ORR41 (127 aa).

Residues 7–125 (RVLLVEDEEI…KLGVILAKFR (119 aa)) enclose the Response regulatory domain. Aspartate 60 carries the 4-aspartylphosphate modification.

The protein belongs to the ARR family. Type-C subfamily. In terms of processing, two-component system major event consists of a His-to-Asp phosphorelay between a sensor histidine kinase (HK) and a response regulator (RR). In plants, the His-to-Asp phosphorelay involves an additional intermediate named Histidine-containing phosphotransfer protein (HPt). This multistep phosphorelay consists of a His-Asp-His-Asp sequential transfer of a phosphate group between first a His and an Asp of the HK protein, followed by the transfer to a conserved His of the HPt protein and finally the transfer to an Asp in the receiver domain of the RR protein.

In terms of biological role, functions as a response regulator involved in His-to-Asp phosphorelay signal transduction system. Phosphorylation of the Asp residue in the receiver domain activates the ability of the protein to promote the transcription of target genes. May directly activate some type-A response regulators in response to cytokinins. The protein is Two-component response regulator ORR41 of Oryza sativa subsp. japonica (Rice).